The chain runs to 507 residues: Histidine ammonia-lyase (507 aa).

The 5-imidazolinone (Ala-Gly) cross-link spans 141–143 (ASG). Serine 142 is subject to 2,3-didehydroalanine (Ser).

This sequence belongs to the PAL/histidase family. Post-translationally, contains an active site 4-methylidene-imidazol-5-one (MIO), which is formed autocatalytically by cyclization and dehydration of residues Ala-Ser-Gly.

The protein localises to the cytoplasm. It carries out the reaction L-histidine = trans-urocanate + NH4(+). Its pathway is amino-acid degradation; L-histidine degradation into L-glutamate; N-formimidoyl-L-glutamate from L-histidine: step 1/3. The protein is Histidine ammonia-lyase of Burkholderia cenocepacia (strain ATCC BAA-245 / DSM 16553 / LMG 16656 / NCTC 13227 / J2315 / CF5610) (Burkholderia cepacia (strain J2315)).